We begin with the raw amino-acid sequence, 195 residues long: Glycerol-3-phosphate acyltransferase (195 aa).

The next 5 helical transmembrane spans lie at 2–22 (LWIF…GLFI), 52–72 (YGVA…LMAY), 78–98 (WIFI…SIFM), 112–132 (VFLA…LAVI), and 145–165 (FAVA…VPLA).

It belongs to the PlsY family. As to quaternary structure, probably interacts with PlsX.

It is found in the cell inner membrane. It carries out the reaction an acyl phosphate + sn-glycerol 3-phosphate = a 1-acyl-sn-glycero-3-phosphate + phosphate. It functions in the pathway lipid metabolism; phospholipid metabolism. Catalyzes the transfer of an acyl group from acyl-phosphate (acyl-PO(4)) to glycerol-3-phosphate (G3P) to form lysophosphatidic acid (LPA). This enzyme utilizes acyl-phosphate as fatty acyl donor, but not acyl-CoA or acyl-ACP. This is Glycerol-3-phosphate acyltransferase from Maridesulfovibrio salexigens (strain ATCC 14822 / DSM 2638 / NCIMB 8403 / VKM B-1763) (Desulfovibrio salexigens).